The primary structure comprises 215 residues: Kinetochore protein Spc25 (215 aa).

A coiled-coil region spans residues 43–114 (DNLLTAMEKA…MECIHALKRA (72 aa)).

This sequence belongs to the SPC25 family. Component of the Ndc80 complex, which is composed of Ndc80, Nuf2 and Spc25.

It is found in the nucleus. The protein localises to the chromosome. Its subcellular location is the centromere. The protein resides in the kinetochore. Its function is as follows. Acts as a component of the essential kinetochore-associated Ndc80 complex, which is required for chromosome segregation and spindle checkpoint activity during meiosis and mitosis. Required for kinetochore integrity and the organization of stable microtubule binding sites in the outer plate of the kinetochore. Participates in SAC signaling that responds specifically to disruptions in spindle microtubule dynamics. The NDC80 complex synergistically enhances the affinity of the SKA1 complex for microtubules and may allow the NDC80 complex to track depolymerizing microtubules. This Drosophila ananassae (Fruit fly) protein is Kinetochore protein Spc25.